The sequence spans 1865 residues: Dedicator of cytokinesis protein 1 (1865 aa).

The 62-residue stretch at 9–70 folds into the SH3 domain; sequence REEKYGVAFY…PASYIHLKEA (62 aa). One can recognise a C2 DOCK-type domain in the interval 425 to 609; sequence RNDIYVTLVQ…DSFQISTLVC (185 aa). The DOCKER domain maps to 1207 to 1617; the sequence is YKEIEREEMY…VEKEYGVRIM (411 aa). Disordered regions lie at residues 1619 to 1716 and 1732 to 1865; these read SSLD…EFKP and TISP…GIVQ. A compositionally biased stretch (low complexity) spans 1639-1666; sequence PSSSRPLSVASVSSLSSDSTPSRPGSDG. Residues 1680–1694 show a composition bias toward basic and acidic residues; it reads RSQDKLDKDDLEKEK. Ser1681 carries the post-translational modification Phosphoserine. The interval 1687–1695 is phosphoinositide-binding; sequence KDDLEKEKK. Residues 1695-1704 show a composition bias toward basic residues; it reads KDKKKEKRNS. Basic and acidic residues predominate over residues 1705 to 1716; that stretch reads KHQEIFEKEFKP. A phosphoserine mark is found at Ser1743, Ser1751, Ser1756, Ser1761, and Ser1764. A compositionally biased stretch (low complexity) spans 1756–1766; that stretch reads SVSPSSPSSQQ. Thr1767 and Thr1772 each carry phosphothreonine. Residues 1793-1819 form an interaction with NCK2 second and third SH3 domain (minor) region; that stretch reads ADVADVPPPLPLKGSVADYGNLMENQD. The SH3-binding; interaction with CRK signature appears at 1799 to 1805; that stretch reads PPPLPLK. The interaction with NCK2 third SH3 domain (major) stretch occupies residues 1820–1836; sequence LLGSPTPPPPPPHQRHL. The segment covering 1824–1851 has biased composition (pro residues); it reads PTPPPPPPHQRHLPPPLPSKTPPPPPPK. The interaction with NCK2 (minor) stretch occupies residues 1837–1852; that stretch reads PPPLPSKTPPPPPPKT. The SH3-binding; interaction with CRK signature appears at 1838 to 1843; the sequence is PPLPSK. The segment covering 1855–1865 has biased composition (polar residues); that stretch reads KQASVDSGIVQ. Ser1858 is subject to Phosphoserine.

It belongs to the DOCK family. Interacts with the SH3 domains of CRK and NCK2 via multiple sites. Interacts with nucleotide-free RAC1 via its DOCKER domain. Interacts with ELMO1, ELMO2 and probably ELMO3 via its SH3 domain. Interacts with ADGRB1. Identified in a complex with AUTS2 and ELMO2. Highly expressed in placenta, lung, kidney, pancreas and ovary. Expressed at intermediate level in thymus, testes and colon.

Its subcellular location is the cytoplasm. It localises to the membrane. Functionally, involved in cytoskeletal rearrangements required for phagocytosis of apoptotic cells and cell motility. Along with DOCK1, mediates CRK/CRKL regulation of epithelial and endothelial cell spreading and migration on type IV collagen. Functions as a guanine nucleotide exchange factor (GEF), which activates Rac Rho small GTPases by exchanging bound GDP for free GTP. Its GEF activity may be enhanced by ELMO1. The sequence is that of Dedicator of cytokinesis protein 1 (DOCK1) from Homo sapiens (Human).